We begin with the raw amino-acid sequence, 292 residues long: Proteasome subunit beta 2 (292 aa).

A propeptide spans 1-59 (removed in mature form; by autocatalysis); that stretch reads MTVDRAPRITDGDTRLSFGSNLSSFSEYLRVHAPEHLPQNRFADTGGVVMGGGDVAPHG. Catalysis depends on Thr-60, which acts as the Nucleophile.

Belongs to the peptidase T1B family. In terms of assembly, the 20S proteasome core is composed of 14 alpha and 14 beta subunits that assemble into four stacked heptameric rings, resulting in a barrel-shaped structure. The two inner rings, each composed of seven catalytic beta subunits, are sandwiched by two outer rings, each composed of seven alpha subunits. All four combinations of alpha- and beta-subunits (beta2-alpha1, beta2-alpha2, beta1-alpha2 and beta1-alpha1) yield fully assembled and proteolytically active proteasomes. The catalytic chamber with the active sites is on the inside of the barrel. Has probably a gated structure, the ends of the cylinder being occluded by the N-termini of the alpha-subunits. Is likely capped by the proteasome-associated ATPase, ARC.

The protein resides in the cytoplasm. It catalyses the reaction Cleavage of peptide bonds with very broad specificity.. It functions in the pathway protein degradation; proteasomal Pup-dependent pathway. Its activity is regulated as follows. The formation of the proteasomal ATPase ARC-20S proteasome complex, likely via the docking of the C-termini of ARC into the intersubunit pockets in the alpha-rings, may trigger opening of the gate for substrate entry. Interconversion between the open-gate and close-gate conformations leads to a dynamic regulation of the 20S proteasome proteolysis activity. Functionally, component of the proteasome core, a large protease complex with broad specificity involved in protein degradation. The R.erythropolis proteasomes are able to cleave oligopeptides after Tyr, Phe and Leu, very poorly after Arg but not after Glu. Thus, displays chymotrypsin-like activity, low trypsin-like activity but no caspase-like activity. This Rhodococcus erythropolis (Arthrobacter picolinophilus) protein is Proteasome subunit beta 2.